We begin with the raw amino-acid sequence, 171 residues long: Peptide deformylase 1 (171 aa).

Residues Cys99 and His141 each coordinate Fe cation. Residue Glu142 is part of the active site. His145 is a binding site for Fe cation.

The protein belongs to the polypeptide deformylase family. Fe(2+) is required as a cofactor.

It catalyses the reaction N-terminal N-formyl-L-methionyl-[peptide] + H2O = N-terminal L-methionyl-[peptide] + formate. Functionally, removes the formyl group from the N-terminal Met of newly synthesized proteins. Requires at least a dipeptide for an efficient rate of reaction. N-terminal L-methionine is a prerequisite for activity but the enzyme has broad specificity at other positions. This chain is Peptide deformylase 1, found in Xanthomonas campestris pv. campestris (strain ATCC 33913 / DSM 3586 / NCPPB 528 / LMG 568 / P 25).